Reading from the N-terminus, the 198-residue chain is MSNLGKCTRCQKTVYSQEGFIAVKVPFHRSCFKCEVCNWQLVLTNYKSINGKVYCANHYPVGGLSVTPEKTHTTSDDLVMKNALNAPRVETVNEQLRGGNEKPQTSTDDLVTKNALNAPKSNLVNNQVRGTSDSAPLTSADDLVTRNALKAPKSDLVNNQVRGTSEMGPQAGIDIVTANALKAPKLETMSGYQKSVQN.

In terms of domain architecture, LIM zinc-binding spans 5 to 65; it reads GKCTRCQKTV…ANHYPVGGLS (61 aa).

Its subcellular location is the cell projection. It is found in the pseudopodium. The protein localises to the cytoplasm. It localises to the cell cortex. The protein resides in the cytoskeleton. Its function is as follows. Binds to F-actin and may modulate the chemotactic response during early development and contribute to the maintenance of the strength of the actin cytoskeleton. The protein is LIM domain-containing protein D (limD) of Dictyostelium discoideum (Social amoeba).